A 242-amino-acid polypeptide reads, in one-letter code: Probable septum site-determining protein MinC (242 aa).

It belongs to the MinC family. Interacts with MinD and FtsZ.

In terms of biological role, cell division inhibitor that blocks the formation of polar Z ring septums. Rapidly oscillates between the poles of the cell to destabilize FtsZ filaments that have formed before they mature into polar Z rings. Prevents FtsZ polymerization. This is Probable septum site-determining protein MinC from Thioalkalivibrio sulfidiphilus (strain HL-EbGR7).